The chain runs to 559 residues: Urocanate hydratase (559 aa).

Residues 49–50, Gln127, 173–175, Asp193, Arg198, 239–240, 260–264, 270–271, and Tyr319 each bind NAD(+); these read GG, GMG, NA, QTSAH, and YL. Cys407 is a catalytic residue. Position 489 (Gly489) interacts with NAD(+).

It belongs to the urocanase family. It depends on NAD(+) as a cofactor.

It localises to the cytoplasm. It catalyses the reaction 4-imidazolone-5-propanoate = trans-urocanate + H2O. It participates in amino-acid degradation; L-histidine degradation into L-glutamate; N-formimidoyl-L-glutamate from L-histidine: step 2/3. Functionally, catalyzes the conversion of urocanate to 4-imidazolone-5-propionate. The sequence is that of Urocanate hydratase from Shouchella clausii (strain KSM-K16) (Alkalihalobacillus clausii).